Consider the following 484-residue polypeptide: MKIKIMSKTHVKPTKPVLGKKQFHLTTFDLPYLAFYYNQKFLLYKFQNLLDLEEPTFQNEVVENLKDGLGLVLEDFYQLAGKLAKDDEGVFRVEYDAEDSEINGVEFSVAHAADVTVDDLTAEDGTAKFKELVPYNGILNLEGLSRPLLAVQVTKLKDGLAMGLAFNHAVLDGTSTWHFMSSWAEICRGAQSISTQPFLDRSKARDTRVKLDLTAPKDPNETSNGEDAANPTVEPPQLVEKIFRFSDFAVHTIKSRANSVIPSDSSKPFSTFQSLTSHIWRHVTLARGLKPEDITIFTVFADCRRRVDPPMPEEYFGNLIQAIFTGTAAGLLAAHGPEFGASVIQKAIAAHDASVIDARNDEWEKSPKIFQFKDAGVNCVAVGSSPRFRVYEVDFGFGKPETVRSGSNNRFNGMMYLYQGKAGGISIDVEITLEASVMEKLVKSKEFLLSEEEEEDDGKKLTNGNGHVNGNGNGYVNGNGNGFV.

His-168 functions as the Proton acceptor in the catalytic mechanism. A disordered region spans residues 211–233; it reads LDLTAPKDPNETSNGEDAANPTV. Asp-394 functions as the Proton acceptor in the catalytic mechanism. The interval 452–484 is disordered; sequence EEEEDDGKKLTNGNGHVNGNGNGYVNGNGNGFV. Over residues 467–484 the composition is skewed to gly residues; sequence HVNGNGNGYVNGNGNGFV.

It belongs to the plant acyltransferase family. Expressed in root caps and lateral root emerging sites, in trichomes, in epidermis in stems, sepals and anther filaments, and in pollen grains and torpedo stage seeds.

It localises to the cytoplasm. The protein localises to the cytosol. In terms of biological role, required for incorporation of 9(10),16-dihydroxy-hexadecanoic acid into cutin. In Arabidopsis thaliana (Mouse-ear cress), this protein is BAHD acyltransferase DCR (DCR).